A 302-amino-acid chain; its full sequence is ATP synthase subunit a (302 aa).

Helical transmembrane passes span 61–81 (VDSL…FWLG), 119–139 (IAPL…MDLI), 148–168 (FEWV…FKIV), 172–192 (DPNI…FLTI), 214–234 (PVVK…ALLA), 252–272 (FVFI…AWPW), and 273–293 (AVFH…LTIV).

This sequence belongs to the ATPase A chain family. F-type ATPases have 2 components, CF(1) - the catalytic core - and CF(0) - the membrane proton channel. CF(1) has five subunits: alpha(3), beta(3), gamma(1), delta(1), epsilon(1). CF(0) has three main subunits: a(1), b(2) and c(9-12). The alpha and beta chains form an alternating ring which encloses part of the gamma chain. CF(1) is attached to CF(0) by a central stalk formed by the gamma and epsilon chains, while a peripheral stalk is formed by the delta and b chains.

The protein resides in the cell inner membrane. Its function is as follows. Key component of the proton channel; it plays a direct role in the translocation of protons across the membrane. The polypeptide is ATP synthase subunit a (Alcanivorax borkumensis (strain ATCC 700651 / DSM 11573 / NCIMB 13689 / SK2)).